The sequence spans 226 residues: UPF0173 metal-dependent hydrolase TM_1162 (226 aa).

Belongs to the UPF0173 family.

This chain is UPF0173 metal-dependent hydrolase TM_1162, found in Thermotoga maritima (strain ATCC 43589 / DSM 3109 / JCM 10099 / NBRC 100826 / MSB8).